The following is a 188-amino-acid chain: V-type ATP synthase subunit E (188 aa).

This sequence belongs to the V-ATPase E subunit family.

Functionally, produces ATP from ADP in the presence of a proton gradient across the membrane. This Thermus thermophilus (strain ATCC 27634 / DSM 579 / HB8) protein is V-type ATP synthase subunit E (atpE).